The following is a 1669-amino-acid chain: Polycomb group protein Asx (1669 aa).

Positions 90–109 (IPPEKKPMAPSEEAAVSTAP) are disordered. A DEUBAD domain is found at 215-338 (PDSILASTNL…FEPFWGEKNS (124 aa)). 2 short sequence motifs (LXXLL motif) span residues 224 to 228 (LRALL) and 244 to 248 (LIQLL). The short motif at 283–285 (NEF) is the NEF motif element. The span at 336–352 (KNSRGKDKDKLESDCKN) shows a compositional bias: basic and acidic residues. Disordered stretches follow at residues 336-378 (KNSR…QQAT), 410-478 (SSTF…IVPN), 635-718 (FFTS…SAGA), 952-972 (MPHQASQQPQQNAQSNAQQQR), 1174-1193 (QQQSPPVPAPQQQTVQQQQL), 1398-1437 (PGPGGATATAQQLQMLQQHHQSTTSPVPVQNPQQPAPEQL), 1482-1505 (LHSINGIPMGGRGRPASVDTTAGS), and 1587-1610 (SPTAAPSPINQQPQSQPTGTQHQH). Polar residues-rich tracts occupy residues 367–378 (ATSQQKPLQQAT), 413–425 (FPPTGSQNNVLNE), and 434–450 (PSSSPSQRKQAPTTIAT). The span at 465 to 474 (KDSKQPKMDE) shows a compositional bias: basic and acidic residues. The segment covering 635–650 (FFTSSSSSNTATTAAN) has biased composition (low complexity). Residues 651-661 (KLEEHSDKPED) show a composition bias toward basic and acidic residues. Over residues 666–718 (IASSISGSTPASSITSTSCTSSSSSSASMSSSCSSSNSGSTTTAPTTSSSAGA) the composition is skewed to low complexity. Low complexity-rich tracts occupy residues 1174 to 1192 (QQQSPPVPAPQQQTVQQQQ) and 1404 to 1436 (TATAQQLQMLQQHHQSTTSPVPVQNPQQPAPEQ). Residues 1592–1610 (PSPINQQPQSQPTGTQHQH) show a composition bias toward low complexity. Residues 1602 to 1666 (QPTGTQHQHP…IGAAKLCVAC (65 aa)) form a PHD-type; atypical zinc finger.

Belongs to the Asx family. As to quaternary structure, component of the polycomb repressive deubiquitinase (PR-DUB) complex, at least composed of caly/calypso, Asx and sba (MBD5/6 homolog). Interacts (via DEUBAD domain) with caly/calypso (via ULD domain); the interaction produces a stable heterodimer with a composite binding site for ubiquitin. Two copies of the caly-Asx heterodimer assemble into a bidentate tetramer. Interacts (via PHD domain) with sba (probably via MBD domain); the interaction is important for the stability of the PR-DUB complex. Interacts with tant. Interacts with cyclin CycG. Highly expressed in nurse cells and deposited in oocytes late in oogenesis. Ubiquitous in early embryos. Late embryos show higher levels in CNS and neurectoderm.

The protein localises to the nucleus. The protein resides in the chromosome. Non-catalytic component of the polycomb repressive deubiquitinase (PR-DUB) complex, a complex that specifically mediates deubiquitination of histone H2A monoubiquitinated at 'Lys-119' (H2AK118ub1). Activator of the PR-DUB complex involved in ubiquitin binding and allosteric activation of calypso deubiquitinase activity. PR-DUB does not deubiquitinate monoubiquitinated histone H2B. PR-DUB is required to maintain the transcriptionally repressive state of homeotic genes throughout development. The PR-DUB complex has weak or no activity toward 'Lys-48'- and 'Lys-63'-linked polyubiquitin chains. Atypical Polycomb group protein, which may be involved in both Polycomb group (PcG) and trithorax group (trxG) complexes. PcG and trxG proteins act by forming multiprotein complexes, which are respectively required to maintain the transcriptionally repressive and transcriptionally active state of homeotic genes throughout development. PcG and trxG protein complexes are not required to initiate repression and activation, but to maintain it during later stages of development. The protein is Polycomb group protein Asx of Drosophila melanogaster (Fruit fly).